Reading from the N-terminus, the 293-residue chain is Ribonuclease HII (293 aa).

One can recognise an RNase H type-2 domain in the interval 81–271 (THIAGVDEAG…VREALGLPTG (191 aa)). Asp87, Glu88, and Asp180 together coordinate a divalent metal cation. The disordered stretch occupies residues 273 to 293 (PPSALQAELFPEAPSRTGVKS).

Belongs to the RNase HII family. It depends on Mn(2+) as a cofactor. Requires Mg(2+) as cofactor.

Its subcellular location is the cytoplasm. The catalysed reaction is Endonucleolytic cleavage to 5'-phosphomonoester.. Its function is as follows. Endonuclease that specifically degrades the RNA of RNA-DNA hybrids. This is Ribonuclease HII from Myxococcus xanthus (strain DK1622).